We begin with the raw amino-acid sequence, 258 residues long: Peptidase inhibitor 15 (258 aa).

An N-terminal signal peptide occupies residues 1-21 (MIMNSAVSLVILLSLLCEAHT). A propeptide spanning residues 22–60 (VVLLNPTDSSLPANNFTDTEAALSTPLESADIPKARRKR) is cleaved from the precursor. Asparagine 36 and asparagine 124 each carry an N-linked (GlcNAc...) asparagine glycan. The SCP domain maps to 71-211 (LDYHNQVRGK…RRAVYLVCNY (141 aa)).

This sequence belongs to the CRISP family. N-glycosylated. As to expression, weakly expressed. Expressed at low level in prostate, mammary gland, salivary gland and thyroid gland.

The protein resides in the secreted. In terms of biological role, serine protease inhibitor which displays weak inhibitory activity against trypsin. May play a role in facial patterning during embryonic development. In Mus musculus (Mouse), this protein is Peptidase inhibitor 15 (Pi15).